The following is a 304-amino-acid chain: CRISPR-associated endonuclease Cas1 (304 aa).

Glu-148, His-204, and Glu-219 together coordinate Mn(2+).

Belongs to the CRISPR-associated endonuclease Cas1 family. Homodimer, forms a heterotetramer with a Cas2 homodimer. It depends on Mg(2+) as a cofactor. Mn(2+) is required as a cofactor.

In terms of biological role, CRISPR (clustered regularly interspaced short palindromic repeat), is an adaptive immune system that provides protection against mobile genetic elements (viruses, transposable elements and conjugative plasmids). CRISPR clusters contain spacers, sequences complementary to antecedent mobile elements, and target invading nucleic acids. CRISPR clusters are transcribed and processed into CRISPR RNA (crRNA). Acts as a dsDNA endonuclease. Involved in the integration of spacer DNA into the CRISPR cassette. This is CRISPR-associated endonuclease Cas1 from Neisseria meningitidis serogroup C (strain 8013).